The sequence spans 316 residues: L-lactate dehydrogenase (316 aa).

Residues 13-15 (GMI), 34-36 (FDI), tyrosine 67, and 79-83 (TAGFT) contribute to the NAD(+) site. Arginine 95 serves as a coordination point for substrate. Residues 125 to 127 (VTN), leucine 150, and leucine 154 each bind NAD(+). 2 residues coordinate substrate: arginine 158 and histidine 182. Histidine 182 is an NAD(+) binding site. Histidine 182 serves as the catalytic Proton acceptor.

It belongs to the LDH/MDH superfamily. LDH family. As to quaternary structure, homotetramer.

It catalyses the reaction (S)-lactate + NAD(+) = pyruvate + NADH + H(+). Its pathway is fermentation; pyruvate fermentation to lactate; (S)-lactate from pyruvate: step 1/1. This chain is L-lactate dehydrogenase, found in Plasmodium berghei.